A 359-amino-acid chain; its full sequence is Methyltransferase eqxD (359 aa).

S-adenosyl-L-methionine is bound by residues 198 to 199 (GG), Asp224, 248 to 249 (SF), Arg264, and Arg265.

It belongs to the class I-like SAM-binding methyltransferase superfamily. Cation-independent O-methyltransferase family.

It carries out the reaction trichosetin + S-adenosyl-L-methionine = equisetin + S-adenosyl-L-homocysteine + H(+). Its pathway is mycotoxin biosynthesis. In terms of biological role, methyltransferase; part of the gene cluster that mediates the biosynthesis of equisetin, a trans-fused decalin-containing tetramic acid with antimicrobial activity. The PKS module of eqxS together with the enoylreductase eqxC catalyze the formation of the polyketide unit which is then conjugated to L-serine by the condensation domain of the eqxS NRPS module. Activity of the Dieckmann cyclase domain (RED) results in release of the Dieckmann product intermediate. Diels-Alderase eqx3 is involved in endo-selective Diels-Alder cycloaddition to form the decalin ring, leading to the production of N-desmethylequisetin also called trichosetin. Subsequent N-methylation is carried out by eqxD to give equisetin. In Fusarium heterosporum, this protein is Methyltransferase eqxD.